The following is a 252-amino-acid chain: N-acetylglucosaminyl-phosphatidylinositol de-N-acetylase (252 aa).

The helical transmembrane segment at 2–22 (EVVGLLCVAVAVLTWGFLRVW) threads the bilayer. Residues 23–252 (NSAERMRSPE…YMSVNSLQLL (230 aa)) are Cytoplasmic-facing.

This sequence belongs to the PIGL family.

Its subcellular location is the endoplasmic reticulum membrane. The enzyme catalyses a 6-(N-acetyl-alpha-D-glucosaminyl)-1-(1,2-diacyl-sn-glycero-3-phospho)-1D-myo-inositol + H2O = a 6-(alpha-D-glucosaminyl)-1-(1,2-diacyl-sn-glycero-3-phospho)-1D-myo-inositol + acetate. It functions in the pathway glycolipid biosynthesis; glycosylphosphatidylinositol-anchor biosynthesis. Catalyzes the second step of glycosylphosphatidylinositol (GPI) biosynthesis, which is the de-N-acetylation of N-acetylglucosaminyl-phosphatidylinositol. The chain is N-acetylglucosaminyl-phosphatidylinositol de-N-acetylase (Pigl) from Rattus norvegicus (Rat).